A 46-amino-acid chain; its full sequence is Protein PsbN (46 aa).

Residues 10 to 30 (VAIAVLAALLGLTGFGVYTAF) traverse the membrane as a helical segment.

It belongs to the PsbN family.

The protein localises to the cellular thylakoid membrane. In terms of biological role, may play a role in photosystem I and II biogenesis. In Synechococcus sp. (strain CC9311), this protein is Protein PsbN.